The following is a 136-amino-acid chain: NADH-ubiquinone oxidoreductase chain 2 (136 aa).

4 helical membrane passes run 12–32, 34–54, 74–94, and 99–119; these read YFLI…NQSF, FLIP…MWLV, IGPL…WLMV, and FLLM…AVIL.

The protein belongs to the complex I subunit 2 family.

It is found in the mitochondrion inner membrane. It carries out the reaction a ubiquinone + NADH + 5 H(+)(in) = a ubiquinol + NAD(+) + 4 H(+)(out). Functionally, core subunit of the mitochondrial membrane respiratory chain NADH dehydrogenase (Complex I) that is believed to belong to the minimal assembly required for catalysis. Complex I functions in the transfer of electrons from NADH to the respiratory chain. The immediate electron acceptor for the enzyme is believed to be ubiquinone. The polypeptide is NADH-ubiquinone oxidoreductase chain 2 (ND2) (Artemia salina (Brine shrimp)).